Consider the following 184-residue polypeptide: ATP synthase subunit b, chloroplastic (184 aa).

The helical transmembrane segment at 27–49 threads the bilayer; the sequence is LATNPINLSVVLGVLIFFGKGVL.

This sequence belongs to the ATPase B chain family. In terms of assembly, F-type ATPases have 2 components, F(1) - the catalytic core - and F(0) - the membrane proton channel. F(1) has five subunits: alpha(3), beta(3), gamma(1), delta(1), epsilon(1). F(0) has four main subunits: a(1), b(1), b'(1) and c(10-14). The alpha and beta chains form an alternating ring which encloses part of the gamma chain. F(1) is attached to F(0) by a central stalk formed by the gamma and epsilon chains, while a peripheral stalk is formed by the delta, b and b' chains.

The protein localises to the plastid. The protein resides in the chloroplast thylakoid membrane. Its function is as follows. F(1)F(0) ATP synthase produces ATP from ADP in the presence of a proton or sodium gradient. F-type ATPases consist of two structural domains, F(1) containing the extramembraneous catalytic core and F(0) containing the membrane proton channel, linked together by a central stalk and a peripheral stalk. During catalysis, ATP synthesis in the catalytic domain of F(1) is coupled via a rotary mechanism of the central stalk subunits to proton translocation. Functionally, component of the F(0) channel, it forms part of the peripheral stalk, linking F(1) to F(0). This chain is ATP synthase subunit b, chloroplastic, found in Platanus occidentalis (Sycamore).